Here is a 258-residue protein sequence, read N- to C-terminus: UPF0246 protein YaaA (258 aa).

Belongs to the UPF0246 family.

This is UPF0246 protein YaaA from Escherichia coli (strain SE11).